Consider the following 615-residue polypeptide: Chaperone protein DnaK (615 aa).

T174 bears the Phosphothreonine; by autocatalysis mark. Positions 581-615 (QAAPKDGAEGDAKSADDNTVDGDFEEVDPNKDDKK) are disordered. Residues 586–596 (DGAEGDAKSAD) show a composition bias toward basic and acidic residues. Positions 598–607 (NTVDGDFEEV) are enriched in acidic residues.

This sequence belongs to the heat shock protein 70 family.

Its function is as follows. Acts as a chaperone. The chain is Chaperone protein DnaK from Leuconostoc mesenteroides subsp. mesenteroides (strain ATCC 8293 / DSM 20343 / BCRC 11652 / CCM 1803 / JCM 6124 / NCDO 523 / NBRC 100496 / NCIMB 8023 / NCTC 12954 / NRRL B-1118 / 37Y).